Here is a 206-residue protein sequence, read N- to C-terminus: MDLVIRTLDGNEAGRLKVSESIFGLVPREDILQRVVRWQLARHQQGTHHSQGRSDVSRTGAKMFKQKGTGRARHSSARAPQFRGGGKAHGPVVRSHAHDLPKKIRVLGLRLALSAKLKANDLIIVDELNVKEAKTKMLVSCFSKLGFKNALLVGGKEIDINFSRAASNIPNIDILPIQGINVYDILRRSKLVLSKAAVEALEERFK.

The span at 65-76 (KQKGTGRARHSS) shows a compositional bias: basic residues. Residues 65-94 (KQKGTGRARHSSARAPQFRGGGKAHGPVVR) form a disordered region.

This sequence belongs to the universal ribosomal protein uL4 family. As to quaternary structure, part of the 50S ribosomal subunit.

Functionally, one of the primary rRNA binding proteins, this protein initially binds near the 5'-end of the 23S rRNA. It is important during the early stages of 50S assembly. It makes multiple contacts with different domains of the 23S rRNA in the assembled 50S subunit and ribosome. Its function is as follows. Forms part of the polypeptide exit tunnel. The polypeptide is Large ribosomal subunit protein uL4 (Bartonella quintana (strain Toulouse) (Rochalimaea quintana)).